A 337-amino-acid polypeptide reads, in one-letter code: Lipoyl synthase (337 aa).

[4Fe-4S] cluster is bound by residues Cys-81, Cys-86, Cys-92, Cys-107, Cys-111, Cys-114, and Ser-323. A Radical SAM core domain is found at 93–312; the sequence is FSHGTATFMI…EDYGNALGFS (220 aa).

It belongs to the radical SAM superfamily. Lipoyl synthase family. Requires [4Fe-4S] cluster as cofactor.

It localises to the cytoplasm. The catalysed reaction is [[Fe-S] cluster scaffold protein carrying a second [4Fe-4S](2+) cluster] + N(6)-octanoyl-L-lysyl-[protein] + 2 oxidized [2Fe-2S]-[ferredoxin] + 2 S-adenosyl-L-methionine + 4 H(+) = [[Fe-S] cluster scaffold protein] + N(6)-[(R)-dihydrolipoyl]-L-lysyl-[protein] + 4 Fe(3+) + 2 hydrogen sulfide + 2 5'-deoxyadenosine + 2 L-methionine + 2 reduced [2Fe-2S]-[ferredoxin]. It participates in protein modification; protein lipoylation via endogenous pathway; protein N(6)-(lipoyl)lysine from octanoyl-[acyl-carrier-protein]: step 2/2. Catalyzes the radical-mediated insertion of two sulfur atoms into the C-6 and C-8 positions of the octanoyl moiety bound to the lipoyl domains of lipoate-dependent enzymes, thereby converting the octanoylated domains into lipoylated derivatives. This chain is Lipoyl synthase, found in Xanthomonas euvesicatoria pv. vesicatoria (strain 85-10) (Xanthomonas campestris pv. vesicatoria).